A 187-amino-acid polypeptide reads, in one-letter code: Large ribosomal subunit protein uL6c (187 aa).

The protein belongs to the universal ribosomal protein uL6 family. Part of the 50S ribosomal subunit.

Its subcellular location is the plastid. It is found in the chloroplast. Binds 23S rRNA. The sequence is that of Large ribosomal subunit protein uL6c (rpl6) from Thalassiosira pseudonana (Marine diatom).